Here is a 344-residue protein sequence, read N- to C-terminus: RNA 3'-terminal phosphate cyclase (344 aa).

ATP is bound by residues Q103 and 283–287; that span reads HLADQ. Residue H308 is the Tele-AMP-histidine intermediate of the active site.

The protein belongs to the RNA 3'-terminal cyclase family. Type 1 subfamily.

The protein localises to the cytoplasm. It catalyses the reaction a 3'-end 3'-phospho-ribonucleotide-RNA + ATP = a 3'-end 2',3'-cyclophospho-ribonucleotide-RNA + AMP + diphosphate. In terms of biological role, catalyzes the conversion of 3'-phosphate to a 2',3'-cyclic phosphodiester at the end of RNA. The mechanism of action of the enzyme occurs in 3 steps: (A) adenylation of the enzyme by ATP; (B) transfer of adenylate to an RNA-N3'P to produce RNA-N3'PP5'A; (C) and attack of the adjacent 2'-hydroxyl on the 3'-phosphorus in the diester linkage to produce the cyclic end product. The biological role of this enzyme is unknown but it is likely to function in some aspects of cellular RNA processing. This is RNA 3'-terminal phosphate cyclase from Salmonella paratyphi C (strain RKS4594).